Here is a 1275-residue protein sequence, read N- to C-terminus: O-antigen biosynthesis protein RfbC (1275 aa).

Involved in O-antigen biosynthesis. The polypeptide is O-antigen biosynthesis protein RfbC (rfbC) (Myxococcus xanthus).